The primary structure comprises 295 residues: Bifunctional protein FolD (295 aa).

Residues 166-168 (GRS), Ser-195, and Ile-236 contribute to the NADP(+) site.

This sequence belongs to the tetrahydrofolate dehydrogenase/cyclohydrolase family. As to quaternary structure, homodimer.

The enzyme catalyses (6R)-5,10-methylene-5,6,7,8-tetrahydrofolate + NADP(+) = (6R)-5,10-methenyltetrahydrofolate + NADPH. It carries out the reaction (6R)-5,10-methenyltetrahydrofolate + H2O = (6R)-10-formyltetrahydrofolate + H(+). It functions in the pathway one-carbon metabolism; tetrahydrofolate interconversion. Catalyzes the oxidation of 5,10-methylenetetrahydrofolate to 5,10-methenyltetrahydrofolate and then the hydrolysis of 5,10-methenyltetrahydrofolate to 10-formyltetrahydrofolate. The polypeptide is Bifunctional protein FolD (Prosthecochloris aestuarii (strain DSM 271 / SK 413)).